A 113-amino-acid chain; its full sequence is Nucleoid-associated protein PMT_0025 (113 aa).

Belongs to the YbaB/EbfC family. As to quaternary structure, homodimer.

It localises to the cytoplasm. It is found in the nucleoid. In terms of biological role, binds to DNA and alters its conformation. May be involved in regulation of gene expression, nucleoid organization and DNA protection. The protein is Nucleoid-associated protein PMT_0025 of Prochlorococcus marinus (strain MIT 9313).